Consider the following 445-residue polypeptide: Probable cytosol aminopeptidase (445 aa).

Residues lysine 217 and aspartate 222 each contribute to the Mn(2+) site. The active site involves lysine 229. Residues aspartate 240, aspartate 299, and glutamate 301 each coordinate Mn(2+). The active site involves arginine 303.

It belongs to the peptidase M17 family. It depends on Mn(2+) as a cofactor.

It is found in the cytoplasm. The enzyme catalyses Release of an N-terminal amino acid, Xaa-|-Yaa-, in which Xaa is preferably Leu, but may be other amino acids including Pro although not Arg or Lys, and Yaa may be Pro. Amino acid amides and methyl esters are also readily hydrolyzed, but rates on arylamides are exceedingly low.. It catalyses the reaction Release of an N-terminal amino acid, preferentially leucine, but not glutamic or aspartic acids.. In terms of biological role, presumably involved in the processing and regular turnover of intracellular proteins. Catalyzes the removal of unsubstituted N-terminal amino acids from various peptides. The chain is Probable cytosol aminopeptidase (pepA) from Mycoplasma pneumoniae (strain ATCC 29342 / M129 / Subtype 1) (Mycoplasmoides pneumoniae).